The following is a 212-amino-acid chain: MEDRFSAITNLHGDHKQAIFGVYVGHGGVKAAEFAAKNLDKNIVEEVVDATFLKEEGFKGGSSCVTALVSEGSLVVSNAGDCRAVMSVGEMMNGKELKPREDMLIRFTLWRIQGSLVVPRGIGDAQLKKWVIAEPETKISRVEHDHEFLILASHGLWDKVSNQEAVDIARPFCLRTEKPLLLAACKKLVDLSASRGSFDDISVMLIPLRQFV.

Positions 1-208 (MEDRFSAITN…DDISVMLIPL (208 aa)) constitute a PPM-type phosphatase domain. Asp199 contributes to the Mn(2+) binding site.

The protein belongs to the PP2C family. Requires Mg(2+) as cofactor. Mn(2+) is required as a cofactor.

The enzyme catalyses O-phospho-L-seryl-[protein] + H2O = L-seryl-[protein] + phosphate. It catalyses the reaction O-phospho-L-threonyl-[protein] + H2O = L-threonyl-[protein] + phosphate. This is Putative protein phosphatase 2C 53 from Arabidopsis thaliana (Mouse-ear cress).